Reading from the N-terminus, the 1152-residue chain is Nucleolar protein 6 (1152 aa).

Disordered regions lie at residues 1–30 (MPSAGERPAVKMGPAPAGEQHRRATEDPEV) and 36–55 (EGMDKEKAPSRKRARTEPPA). S65 is subject to Phosphoserine. Positions 92–128 (LLRLQVEELLKEVRLSEKKKERIDNFLKEVTKRIQKV) form a coiled coil. Phosphoserine is present on residues S292 and S817.

Belongs to the NRAP family. As to quaternary structure, part of the small subunit (SSU) processome, composed of more than 70 proteins and the RNA chaperone small nucleolar RNA (snoRNA) U3. Interacts with RRP7A; required for NOL6 localization to nucleolus. As to expression, ubiquitously expressed.

The protein resides in the nucleus. The protein localises to the nucleolus. It is found in the chromosome. Part of the small subunit (SSU) processome, first precursor of the small eukaryotic ribosomal subunit. During the assembly of the SSU processome in the nucleolus, many ribosome biogenesis factors, an RNA chaperone and ribosomal proteins associate with the nascent pre-rRNA and work in concert to generate RNA folding, modifications, rearrangements and cleavage as well as targeted degradation of pre-ribosomal RNA by the RNA exosome. The chain is Nucleolar protein 6 (Nol6) from Mus musculus (Mouse).